The following is an 868-amino-acid chain: MASPASVAGGGEDSNGCSSLIDPLLVSRTSSIGGAERKAAGGGGGGAKGKHWAAADKGERRAAKECGGEDGRRPLLFRSYRVKGSLLHPYRALIFARLIAVLLFFGWRIRHNNSDIMWFWTMSVAGDVWFGFSWLLNQLPKFNPVKTIPDLTALRQYCDLADGSYRLPGIDVFVTTADPIDEPVLYTMNCVLSILAADYPVDRSACYLSDDSGALILYEALVETAKFATLWVPFCRKHCIEPRSPESYFELEAPSYTGSAPEEFKNDSRIVHLEYDEFKVRLEALPETIRKRSDVYNSMKTDQGAPNATWMANGTQWPGTWIEPIENHRKGHHAGIVKVVLDHPIRGHNLSLKDSTGNNLNFNATDVRIPMLVYVSRGKNPNYDHNKKAGALNAQLRASALLSNAQFIINFDCDHYINNSQAFRAAICFMLDQREGDNTAFVQFPQRFDNVDPKDRYGNHNRVFFDGTMLALNGLQGPSYLGTGCMFRRLALYGIDPPHWRQDNITPEASKFGNSILLLESVLEALNQDRFATPSPVNDIFVNELEMVVSASFDKETDWGKGVGYIYDIATEDIVTGFRIHGQGWRSMYCTMEHDAFCGTAPINLTERLHQIVRWSGGSLEMFFSHNNPLIGGRRLQPLQRVSYLNMTIYPVTSLFILLYAISPVMWLIPDEVYIQRPFTRYVVYLLVIILMIHMIGWLEIKWAGITWLDYWRNEQFFMIGSTSAYPTAVLHMVVNLLTKKGIHFRVTSKQTTADTNDKFADLYEMRWVPMLIPTMVVLVANIGAIGVAIGKTAVYMGVWTIAQKRHAAMGLLFNMWVMFLLYPFALAIMGRWAKRSIILVVLLPIIFVIVALVYVATHILLANIIPF.

The interval 36 to 68 (ERKAAGGGGGGAKGKHWAAADKGERRAAKECGG) is disordered. The segment covering 53 to 68 (AAADKGERRAAKECGG) has biased composition (basic and acidic residues). The next 2 helical transmembrane spans lie at 86–106 (LLHP…LFFG) and 116–136 (IMWF…SWLL). D211 is a catalytic residue. Substrate is bound by residues D412 and D414. D573 is a catalytic residue. 6 helical membrane-spanning segments follow: residues 649 to 669 (IYPV…MWLI), 686 to 706 (LLVI…WAGI), 717 to 737 (FFMI…VVNL), 771 to 791 (MLIP…VAIG), 810 to 830 (MGLL…LAIM), and 838 to 858 (IILV…YVAT).

This sequence belongs to the glycosyltransferase 2 family. Plant cellulose synthase-like F subfamily.

Its subcellular location is the golgi apparatus membrane. Its function is as follows. May catalyze both beta-1,3 and beta-1,4 glycosidic linkage on beta-D-glucan. Essential for (1,3;1,4)-beta-D-glucans synthesis in grasses and cereals (Poaceae). The mixed-linked glucans (which are not present in walls of dicotyledons or most other monocotyledonous plants) are particularly important constituents of the walls of the starchy endosperm and aleurone cells of cereal grains such as oats, wheat, rice and barley. They can account for up to 70% by weight of the wall. The sequence is that of Probable mixed-linked glucan synthase 3 (CSLF3) from Oryza sativa subsp. japonica (Rice).